The following is a 449-amino-acid chain: MLSSQTSSIFTVSRLNQTVRLLLEQEMGQVWISGEISNFTQPASGHWYFTLKDDTAQVRCAMFRNSNRRVTFRPQHGQQVLVRANITLYEPRGDYQIIAESMQPAGEGLLQQKYEQLKAKLQAEGLFDQQHKQPLPSPAHCVGVITSKTGAALHDILHVLKRRDPSLPVIIYPTAVQGDDAPGQIVRAIELANARGECDVLIIGRGGGSLEDLWSFNDERVARAIFANRIPVVSAVGHETDVTIADFVADLRAPTPSAAAEIVSRNQQELLRQIQSAQQRLGMAMDYYLANRSRRFTQIFHRLQQQHPQLRLARQQTALERLRQRMGFALEARIKQATQRQQRVSQRLSQQNPQPRIHRAQSRIQQLEYRLTENIRSRLSEQRERFGNAVTHLEAVSPLATLARGYTVSTTTNGKVLKKIKQVKAGDIMTTRLEDGWLESEVKSVTPGT.

It belongs to the XseA family. Heterooligomer composed of large and small subunits.

The protein resides in the cytoplasm. It catalyses the reaction Exonucleolytic cleavage in either 5'- to 3'- or 3'- to 5'-direction to yield nucleoside 5'-phosphates.. Bidirectionally degrades single-stranded DNA into large acid-insoluble oligonucleotides, which are then degraded further into small acid-soluble oligonucleotides. The chain is Exodeoxyribonuclease 7 large subunit from Salmonella paratyphi B (strain ATCC BAA-1250 / SPB7).